A 285-amino-acid polypeptide reads, in one-letter code: MEQRNRLGALGYLLPLLLHSLLLFVADATFTEVPKDVTVREGDDIEMPCAFRASGATSYSLEIQWWYLKEPPRELLHELALSVPGARSKVTNKDATKISTVRVQGNDISHRLRLSAVRLQDEGVYECRVSDYSDDDTQEHKAQALLRVLSRFAPPNMQAAEAVSHIQSSGPRRHGASSAVSSNNAGAAVRTTSETSHDDKNPPPGSPPAGSGVPEAAAAAASATHTATTTAAAAAASSSASPPSGQAVLLRQRHGSGTGPGYSADPLLSLLLLALHKFLHPLLGH.

The N-terminal stretch at 1–28 (MEQRNRLGALGYLLPLLLHSLLLFVADA) is a signal peptide. Residues 29–143 (TFTEVPKDVT…DDDTQEHKAQ (115 aa)) form the Ig-like V-type domain. The Extracellular segment spans residues 29–263 (TFTEVPKDVT…HGSGTGPGYS (235 aa)). Cys-49 and Cys-127 are joined by a disulfide. The disordered stretch occupies residues 160-225 (AEAVSHIQSS…AAAAAASATH (66 aa)). Low complexity-rich tracts occupy residues 176–189 (ASSAVSSNNAGAAV) and 208–225 (PAGSGVPEAAAAAASATH). The chain crosses the membrane as a helical span at residues 264–284 (ADPLLSLLLLALHKFLHPLLG). A topological domain (cytoplasmic) is located at residue His-285.

The protein localises to the membrane. This Mus musculus (Mouse) protein is V-set and transmembrane domain-containing protein 2B (Vstm2b).